The following is a 1060-amino-acid chain: Desmoglein-1-beta (1060 aa).

Residues 1–23 (MDWHSFRIAALLLTSLVVLEVNS) form the signal peptide. Positions 24 to 49 (EFQIQVRDHNAKNGTIKWHSIRRQKR) are excised as a propeptide. Cadherin domains follow at residues 50 to 157 (EWIK…PPVF), 158 to 269 (SMTT…IPYL), 270 to 389 (EQSS…RPGS), and 386 to 493 (RPGS…PGSD). At 50–567 (EWIKFAAACR…ITEDNVHFGP (518 aa)) the chain is on the extracellular side. An N-linked (GlcNAc...) (high mannose) asparagine glycan is attached at asparagine 110. Asparagine 180 carries N-linked (GlcNAc...) asparagine glycosylation. Residues 490–560 (PGSDGGGSSS…PEPEPFDITE (71 aa)) are disordered. Positions 492 to 503 (SDGGGSSSGSGG) are enriched in gly residues. Residues 510–519 (NGYQGTSTVG) are compositionally biased toward polar residues. The segment covering 525–537 (GSGGVTSSGGGSG) has biased composition (gly residues). Residues 549–560 (DEPEPEPFDITE) show a composition bias toward acidic residues. The helical transmembrane segment at 568 to 588 (AGIGLLIMGFLVLGLVPFLLI) threads the bilayer. Residues 589-1060 (CCDCGGAPGG…TKYSTVQYSK (472 aa)) are Cytoplasmic-facing. Positions 792–801 (PDPDSSWPPQ) are enriched in low complexity. Residues 792–811 (PDPDSSWPPQSTEPMCPQST) form a disordered region. Desmoglein repeat repeat units lie at residues 835 to 861 (AYPS…TVRE), 862 to 891 (SYAT…ERVV), 892 to 921 (GPVP…ERVI), 922 to 949 (APGS…ERVI), and 950 to 978 (QPTS…ERVV).

As to quaternary structure, interacts with DSC3; there is evidence to suggest that the interaction promotes cell-cell adhesion of keratinocytes. As to expression, expressed in epidermis.

The protein localises to the cell membrane. Its subcellular location is the cell junction. The protein resides in the desmosome. It localises to the cytoplasm. It is found in the nucleus. Its function is as follows. Component of intercellular desmosome junctions. Involved in the interaction of plaque proteins and intermediate filaments mediating cell-cell adhesion. The polypeptide is Desmoglein-1-beta (Dsg1b) (Mus musculus (Mouse)).